Reading from the N-terminus, the 173-residue chain is NADH-ubiquinone oxidoreductase chain 6 (173 aa).

A run of 5 helical transmembrane segments spans residues M1 to S21, Y27 to G47, V48 to V68, G91 to L111, and C139 to L159.

It belongs to the complex I subunit 6 family.

The protein resides in the mitochondrion membrane. It catalyses the reaction a ubiquinone + NADH + 5 H(+)(in) = a ubiquinol + NAD(+) + 4 H(+)(out). Functionally, core subunit of the mitochondrial membrane respiratory chain NADH dehydrogenase (Complex I) that is believed to belong to the minimal assembly required for catalysis. Complex I functions in the transfer of electrons from NADH to the respiratory chain. The immediate electron acceptor for the enzyme is believed to be ubiquinone. The sequence is that of NADH-ubiquinone oxidoreductase chain 6 (MT-ND6) from Fratercula cirrhata (Tufted puffin).